Reading from the N-terminus, the 273-residue chain is 4-hydroxy-tetrahydrodipicolinate reductase (273 aa).

Residues 12–17 (GAGGRM) and Glu38 each bind NAD(+). Arg39 contacts NADP(+). Residues 102–104 (GTT) and 126–129 (AANF) each bind NAD(+). The active-site Proton donor/acceptor is the His159. His160 lines the (S)-2,3,4,5-tetrahydrodipicolinate pocket. Lys163 acts as the Proton donor in catalysis. 169–170 (GT) provides a ligand contact to (S)-2,3,4,5-tetrahydrodipicolinate.

Belongs to the DapB family. In terms of assembly, homotetramer.

The protein localises to the cytoplasm. The catalysed reaction is (S)-2,3,4,5-tetrahydrodipicolinate + NAD(+) + H2O = (2S,4S)-4-hydroxy-2,3,4,5-tetrahydrodipicolinate + NADH + H(+). The enzyme catalyses (S)-2,3,4,5-tetrahydrodipicolinate + NADP(+) + H2O = (2S,4S)-4-hydroxy-2,3,4,5-tetrahydrodipicolinate + NADPH + H(+). The protein operates within amino-acid biosynthesis; L-lysine biosynthesis via DAP pathway; (S)-tetrahydrodipicolinate from L-aspartate: step 4/4. Its function is as follows. Catalyzes the conversion of 4-hydroxy-tetrahydrodipicolinate (HTPA) to tetrahydrodipicolinate. This chain is 4-hydroxy-tetrahydrodipicolinate reductase, found in Klebsiella pneumoniae subsp. pneumoniae (strain ATCC 700721 / MGH 78578).